The sequence spans 828 residues: Outer membrane usher protein PmfC (828 aa).

The signal sequence occupies residues 1 to 28; sequence MLIPYSPHTIWKTICATLLLSLAFFSQA.

This sequence belongs to the fimbrial export usher family.

The protein resides in the cell outer membrane. Its function is as follows. Involved in the export and assembly of PMF fimbrial subunits across the outer membrane. The polypeptide is Outer membrane usher protein PmfC (pmfC) (Proteus mirabilis (strain HI4320)).